Reading from the N-terminus, the 910-residue chain is Constitutive coactivator of peroxisome proliferator-activated receptor gamma (910 aa).

3 disordered regions span residues 333–416 (SDAE…VPMC), 443–483 (SEPR…ESRQ), and 863–910 (SHHA…WRRY). Basic and acidic residues-rich tracts occupy residues 335-351 (AESREEVPMCSDAESRQ), 360-375 (ESRREVPVYTDSEPRQ), and 396-411 (ESRREVPMCSDPEPRQ). Residues 872-890 (QGSSYHRTGSGYSRSSQGQ) are compositionally biased toward polar residues. Arg-885 is subject to Omega-N-methylarginine. The span at 901–910 (QYEHDQWRRY) shows a compositional bias: basic and acidic residues.

This sequence belongs to the constitutive coactivator of PPAR-gamma family. In terms of assembly, interacts with ESR1 and RXRA. Interacts with PPARG; in a ligand-independent manner. Widely expressed.

The protein localises to the nucleus. Its function is as follows. Functions as a transactivator of PPARG and ESR1. Functions in adipogenesis through PPARG activation. The protein is Constitutive coactivator of peroxisome proliferator-activated receptor gamma (FAM120B) of Homo sapiens (Human).